A 145-amino-acid chain; its full sequence is Large ribosomal subunit protein uL16 (145 aa).

This sequence belongs to the universal ribosomal protein uL16 family. As to quaternary structure, part of the 50S ribosomal subunit.

Binds 23S rRNA and is also seen to make contacts with the A and possibly P site tRNAs. This is Large ribosomal subunit protein uL16 from Agathobacter rectalis (strain ATCC 33656 / DSM 3377 / JCM 17463 / KCTC 5835 / VPI 0990) (Eubacterium rectale).